The chain runs to 830 residues: V-type proton ATPase 116 kDa subunit a 3 (830 aa).

Residues 1–385 (MGSMFRSEEV…DAYGVGRYQE (385 aa)) lie on the Cytoplasmic side of the membrane. Residues 139-158 (QLAAAHTDGASERTPLLQAP) are disordered. A helical membrane pass occupies residues 386 to 404 (VNPAPYTIITFPFLFAVMF). The Vacuolar portion of the chain corresponds to 405-406 (GD). Residues 407–423 (VGHGLLMFLFALAMVLA) form a helical membrane-spanning segment. Topologically, residues 424 to 438 (ENRPAVKAAQNEIWQ) are cytoplasmic. The chain crosses the membrane as a helical span at residues 439–468 (TFFRGRYLLLLMGLFSIYTGFIYNECFSRA). At 469 to 532 (TSIFPSGWSV…AANHLSFLNS (64 aa)) the chain is on the vacuolar side. Residues 533–552 (FKMKMSVILGVVHMAFGVVL) form a helical membrane-spanning segment. Residues 553–570 (GVFNHVHFGQRHRLLLET) are Cytoplasmic-facing. Residues 571–591 (LPELTFLLGLFGYLVFLVIYK) form a helical membrane-spanning segment. Residues 592-635 (WLCVWAARAASAPSILIHFINMFLFSHSPSNRLLYPRQEVVQAT) are Vacuolar-facing. Residues 636–655 (LVVLALAMVPILLLGTPLHL) form a helical membrane-spanning segment. Over 656-720 (LHRHRRRLRR…EVLMHQAIHT (65 aa)) the chain is Cytoplasmic. The tract at residues 681-701 (LPDASVNGWSSDEEKAGGLDD) is disordered. A helical transmembrane segment spans residues 721 to 745 (IEFCLGCVSNTASYLRLWALSLAHA). The Vacuolar portion of the chain corresponds to 746–766 (QLSEVLWAMVMRIGLGLGREV). A helical membrane pass occupies residues 767 to 807 (GVAAVVLVPIFAAFAVMTVAILLVMEGLSAFLHALRLHWVE). Residues 808–830 (FQNKFYSGTGYKLSPFTFAATDD) are Cytoplasmic-facing.

This sequence belongs to the V-ATPase 116 kDa subunit family. In terms of assembly, V-ATPase is a heteromultimeric enzyme made up of two complexes: the ATP-hydrolytic V1 complex and the proton translocation V0 complex. The V1 complex consists of three catalytic AB heterodimers that form a heterohexamer, three peripheral stalks each consisting of EG heterodimers, one central rotor including subunits D and F, and the regulatory subunits C and H. The proton translocation complex V0 consists of the proton transport subunit a, a ring of proteolipid subunits c9c'', rotary subunit d, subunits e and f, and the accessory subunits ATP6AP1/Ac45 and ATP6AP2/PRR. As to expression, isoform long is highly expressed in osteoclastomas. Isoform short is highly expressed in thymus.

Its subcellular location is the membrane. Subunit of the V0 complex of vacuolar(H+)-ATPase (V-ATPase), a multisubunit enzyme composed of a peripheral complex (V1) that hydrolyzes ATP and a membrane integral complex (V0) that translocates protons. V-ATPase is responsible for acidifying and maintaining the pH of intracellular compartments and in some cell types, is targeted to the plasma membrane, where it is responsible for acidifying the extracellular environment. Seems to be directly involved in T-cell activation. This is V-type proton ATPase 116 kDa subunit a 3 (TCIRG1) from Homo sapiens (Human).